The sequence spans 122 residues: Histone H2B, gonadal (122 aa).

Positions 1-31 are disordered; sequence MPPKPSGKGQKKAGKAKGAPRTDKKRRRKRK. Pro2 is subject to N,N-dimethylproline. O-linked (GlcNAc) serine glycosylation occurs at Ser109. Lys117 participates in a covalent cross-link: Glycyl lysine isopeptide (Lys-Gly) (interchain with G-Cter in ubiquitin).

This sequence belongs to the histone H2B family. The nucleosome is a histone octamer containing two molecules each of H2A, H2B, H3 and H4 assembled in one H3-H4 heterotetramer and two H2A-H2B heterodimers. The octamer wraps approximately 147 bp of DNA. In terms of processing, monoubiquitination of Lys-117 gives a specific tag for epigenetic transcriptional activation and is also prerequisite for histone H3 'Lys-4' and 'Lys-79' methylation. GlcNAcylation at Ser-109 promotes monoubiquitination of Lys-117. It fluctuates in response to extracellular glucose, and associates with transcribed genes.

It is found in the nucleus. It localises to the chromosome. In terms of biological role, core component of nucleosome. Nucleosomes wrap and compact DNA into chromatin, limiting DNA accessibility to the cellular machineries which require DNA as a template. Histones thereby play a central role in transcription regulation, DNA repair, DNA replication and chromosomal stability. DNA accessibility is regulated via a complex set of post-translational modifications of histones, also called histone code, and nucleosome remodeling. The polypeptide is Histone H2B, gonadal (Asterias rubens (Common European starfish)).